Consider the following 286-residue polypeptide: Probable transport system permease protein NifC (286 aa).

6 helical membrane passes run 34–54 (LFLA…ISMI), 75–95 (IILS…IGTP), 114–134 (IFVE…LLLA), 152–172 (VIFT…ALYV), 216–236 (GLIL…MFAG), and 257–277 (IKMA…LLLL). The region spanning 75–278 (IILSFVTSLI…IMTFVLLLLV (204 aa)) is the ABC transmembrane type-1 domain.

Belongs to the binding-protein-dependent transport system permease family. CysTW subfamily.

It is found in the cell membrane. Functionally, may be involved in molybdenum transport. This is Probable transport system permease protein NifC (nifC) from Clostridium pasteurianum.